The sequence spans 616 residues: Chaperone protein HtpG (616 aa).

Residues 1–333 form an a; substrate-binding region; that stretch reads MKKQFDTEVN…CQDLPLNVSR (333 aa). Positions 334-542 are b; the sequence is EILQQNKILS…SNDPTYQMQK (209 aa). The c stretch occupies residues 543–616; it reads IMLSMGQEVK…INEFLEKELL (74 aa).

This sequence belongs to the heat shock protein 90 family. In terms of assembly, homodimer.

The protein localises to the cytoplasm. Its function is as follows. Molecular chaperone. Has ATPase activity. The polypeptide is Chaperone protein HtpG (Borrelia garinii subsp. bavariensis (strain ATCC BAA-2496 / DSM 23469 / PBi) (Borreliella bavariensis)).